The sequence spans 392 residues: Phospho-N-acetylmuramoyl-pentapeptide-transferase (392 aa).

Transmembrane regions (helical) follow at residues 24–44, 76–96, 100–120, 137–157, 167–187, 193–213, 225–245, 262–282, 289–309, 314–334, and 369–389; these read YLTL…LIAG, TMGG…WFDL, FVWI…VDDW, YFWQ…SISE, FITW…GLLV, VSYP…IVGS, GLAI…AYVT, SGEL…FLWF, VFMG…IAVI, IVLA…MLQV, and QVVV…LTTL.

This sequence belongs to the glycosyltransferase 4 family. MraY subfamily. Mg(2+) is required as a cofactor.

The protein localises to the cell inner membrane. The enzyme catalyses UDP-N-acetyl-alpha-D-muramoyl-L-alanyl-gamma-D-glutamyl-meso-2,6-diaminopimeloyl-D-alanyl-D-alanine + di-trans,octa-cis-undecaprenyl phosphate = di-trans,octa-cis-undecaprenyl diphospho-N-acetyl-alpha-D-muramoyl-L-alanyl-D-glutamyl-meso-2,6-diaminopimeloyl-D-alanyl-D-alanine + UMP. It participates in cell wall biogenesis; peptidoglycan biosynthesis. Its function is as follows. Catalyzes the initial step of the lipid cycle reactions in the biosynthesis of the cell wall peptidoglycan: transfers peptidoglycan precursor phospho-MurNAc-pentapeptide from UDP-MurNAc-pentapeptide onto the lipid carrier undecaprenyl phosphate, yielding undecaprenyl-pyrophosphoryl-MurNAc-pentapeptide, known as lipid I. The sequence is that of Phospho-N-acetylmuramoyl-pentapeptide-transferase from Acidovorax ebreus (strain TPSY) (Diaphorobacter sp. (strain TPSY)).